The sequence spans 216 residues: MIIAIDGPAASGKGTLARRLAAHFGLPHLDTGLLYRATARALLDHGHDLSDREAAISAARSLALTDFDEAGLRSRDMAEAASVVAAIPEVRAALVDMQRRFAGRPGGALLDGRDIGTVICPDADCKIFVTASDEARATRRALELRGRGEKVDYAAVLEDIRKRDLRDSSRAAAPLKPADDAVVLDTTKLDVEAAFKAALVIVESAHDSLRAGHPAF.

ATP is bound at residue 7 to 15 (GPAASGKGT).

The protein belongs to the cytidylate kinase family. Type 1 subfamily.

It is found in the cytoplasm. The catalysed reaction is CMP + ATP = CDP + ADP. It catalyses the reaction dCMP + ATP = dCDP + ADP. This is Cytidylate kinase from Methylocella silvestris (strain DSM 15510 / CIP 108128 / LMG 27833 / NCIMB 13906 / BL2).